Consider the following 292-residue polypeptide: ATP synthase gamma chain (292 aa).

This sequence belongs to the ATPase gamma chain family. As to quaternary structure, F-type ATPases have 2 components, CF(1) - the catalytic core - and CF(0) - the membrane proton channel. CF(1) has five subunits: alpha(3), beta(3), gamma(1), delta(1), epsilon(1). CF(0) has three main subunits: a, b and c.

It is found in the cell inner membrane. Functionally, produces ATP from ADP in the presence of a proton gradient across the membrane. The gamma chain is believed to be important in regulating ATPase activity and the flow of protons through the CF(0) complex. The protein is ATP synthase gamma chain of Nautilia profundicola (strain ATCC BAA-1463 / DSM 18972 / AmH).